A 721-amino-acid chain; its full sequence is Teichoic acid poly(glycerol phosphate) polymerase (721 aa).

CDP-glycerol-binding positions include 443–447, Arg511, 545–546, 582–584, 624–625, and Asp629; these read WHGTP, PT, RMH, and SS.

The protein belongs to the CDP-glycerol glycerophosphotransferase family.

Its subcellular location is the cell membrane. The catalysed reaction is 4-O-[(2R)-glycerylphospho]-N-acetyl-beta-D-mannosaminyl-(1-&gt;4)-N-acetyl-alpha-D-glucosaminyl di-trans,octa-cis-undecaprenyl diphosphate + n CDP-glycerol = 4-O-{[(2R)-1-glycerylphospho](n)-(2R)-1-glycerylphospho}-N-acetyl-beta-D-mannosaminyl-(1-&gt;4)-N-acetyl-alpha-D-glucosaminyl undecaprenyl diphosphate + n CMP + n H(+). It functions in the pathway cell wall biogenesis; poly(glycerol phosphate) teichoic acid biosynthesis. Its function is as follows. Responsible for the polymerization of the main chain of the major teichoic acid by sequential transfer of glycerol phosphate units from CDP-glycerol to the disaccharide linkage unit. Synthesizes polymers of approximately 35 glycerol phosphate units in length. The polypeptide is Teichoic acid poly(glycerol phosphate) polymerase (Staphylococcus epidermidis (strain ATCC 35984 / DSM 28319 / BCRC 17069 / CCUG 31568 / BM 3577 / RP62A)).